The chain runs to 620 residues: Chaperone protein HscA homolog (620 aa).

The protein belongs to the heat shock protein 70 family.

In terms of biological role, chaperone involved in the maturation of iron-sulfur cluster-containing proteins. Has a low intrinsic ATPase activity which is markedly stimulated by HscB. In Shewanella sp. (strain ANA-3), this protein is Chaperone protein HscA homolog.